Reading from the N-terminus, the 448-residue chain is Adenylosuccinate synthetase (448 aa).

GTP is bound by residues 36–42 and 64–66; these read GDEGKGK and GHT. Residue D37 is the Proton acceptor of the active site. Positions 37 and 64 each coordinate Mg(2+). IMP contacts are provided by residues 37-40, 62-65, T154, R168, N246, T261, and R325; these read DEGK and NAGH. The active-site Proton donor is H65. 321–327 contributes to the substrate binding site; sequence VTTKRKR. Residues R327, 353–355, and 436–438 each bind GTP; these read KLD and GVG.

The protein belongs to the adenylosuccinate synthetase family. In terms of assembly, homodimer. Mg(2+) serves as cofactor.

It localises to the cytoplasm. It carries out the reaction IMP + L-aspartate + GTP = N(6)-(1,2-dicarboxyethyl)-AMP + GDP + phosphate + 2 H(+). Its pathway is purine metabolism; AMP biosynthesis via de novo pathway; AMP from IMP: step 1/2. Its function is as follows. Plays an important role in the de novo pathway and in the salvage pathway of purine nucleotide biosynthesis. Catalyzes the first committed step in the biosynthesis of AMP from IMP. The chain is Adenylosuccinate synthetase from Drosophila pseudoobscura pseudoobscura (Fruit fly).